The sequence spans 906 residues: Ribonucleoside-diphosphate reductase large subunit-like protein (906 aa).

2 disordered regions span residues 1–70 and 89–129; these read MNPA…AGNT and VSWR…LSTF. The span at 98–109 shows a compositional bias: polar residues; that stretch reads PDGTPSVLSLTR.

The protein belongs to the ribonucleoside diphosphate reductase large chain family.

It localises to the virion. Its subcellular location is the host cytoplasm. In terms of biological role, does not possess a ribonucleotide reductase activity. Betaherpesviruses probably use another strategy to expand the dNTP pool in a quiescent host cell. The sequence is that of Ribonucleoside-diphosphate reductase large subunit-like protein from Human cytomegalovirus (strain AD169) (HHV-5).